We begin with the raw amino-acid sequence, 448 residues long: Adenylosuccinate synthetase (448 aa).

Residues 36–42 and 64–66 contribute to the GTP site; these read GDEGKGK and GHT. Residue Asp-37 is the Proton acceptor of the active site. Mg(2+)-binding residues include Asp-37 and Gly-64. IMP-binding positions include 37–40, 62–65, Thr-154, Arg-168, Asn-246, Thr-261, and Arg-325; these read DEGK and NAGH. His-65 serves as the catalytic Proton donor. 321–327 is a binding site for substrate; it reads VTTKRKR. GTP contacts are provided by residues Arg-327, 353–355, and 436–438; these read KLD and GVG.

The protein belongs to the adenylosuccinate synthetase family. In terms of assembly, homodimer. Mg(2+) serves as cofactor.

The protein resides in the cytoplasm. It carries out the reaction IMP + L-aspartate + GTP = N(6)-(1,2-dicarboxyethyl)-AMP + GDP + phosphate + 2 H(+). Its pathway is purine metabolism; AMP biosynthesis via de novo pathway; AMP from IMP: step 1/2. Its function is as follows. Plays an important role in the de novo pathway and in the salvage pathway of purine nucleotide biosynthesis. Catalyzes the first committed step in the biosynthesis of AMP from IMP. This is Adenylosuccinate synthetase from Drosophila virilis (Fruit fly).